We begin with the raw amino-acid sequence, 500 residues long: Probable cytosol aminopeptidase (500 aa).

Residues Lys268 and Asp273 each coordinate Mn(2+). The active site involves Lys280. 3 residues coordinate Mn(2+): Asp291, Asp350, and Glu352. Residue Arg354 is part of the active site.

Belongs to the peptidase M17 family. The cofactor is Mn(2+).

It localises to the cytoplasm. It carries out the reaction Release of an N-terminal amino acid, Xaa-|-Yaa-, in which Xaa is preferably Leu, but may be other amino acids including Pro although not Arg or Lys, and Yaa may be Pro. Amino acid amides and methyl esters are also readily hydrolyzed, but rates on arylamides are exceedingly low.. The catalysed reaction is Release of an N-terminal amino acid, preferentially leucine, but not glutamic or aspartic acids.. Functionally, presumably involved in the processing and regular turnover of intracellular proteins. Catalyzes the removal of unsubstituted N-terminal amino acids from various peptides. In Alkaliphilus metalliredigens (strain QYMF), this protein is Probable cytosol aminopeptidase.